The primary structure comprises 361 residues: Cytosolic Fe-S cluster assembly factor CFD1 (361 aa).

ATP is bound at residue 37-44 (GKGGVGKS). 2 residues coordinate [4Fe-4S] cluster: Cys-218 and Cys-221. A disordered region spans residues 293-314 (HSQSAAAQLPNSGDTESLTPAG).

It belongs to the Mrp/NBP35 ATP-binding proteins family. NUBP2/CFD1 subfamily. Heterotetramer of 2 NBP35 and 2 CFD1 chains. [4Fe-4S] cluster is required as a cofactor.

Its subcellular location is the cytoplasm. Its function is as follows. Component of the cytosolic iron-sulfur (Fe/S) protein assembly (CIA) machinery. Required for maturation of extramitochondrial Fe-S proteins. The NBP35-CFD1 heterotetramer forms a Fe-S scaffold complex, mediating the de novo assembly of an Fe-S cluster and its transfer to target apoproteins. In Mycosarcoma maydis (Corn smut fungus), this protein is Cytosolic Fe-S cluster assembly factor CFD1.